Reading from the N-terminus, the 80-residue chain is RNA-binding protein Hfq (80 aa).

The 61-residue stretch at 10–70 (DAFLNQVRKE…ISTISPLRPV (61 aa)) folds into the Sm domain.

Belongs to the Hfq family. In terms of assembly, homohexamer.

In terms of biological role, RNA chaperone that binds small regulatory RNA (sRNAs) and mRNAs to facilitate mRNA translational regulation in response to envelope stress, environmental stress and changes in metabolite concentrations. Also binds with high specificity to tRNAs. The sequence is that of RNA-binding protein Hfq from Desulforamulus reducens (strain ATCC BAA-1160 / DSM 100696 / MI-1) (Desulfotomaculum reducens).